Reading from the N-terminus, the 90-residue chain is UPF0213 protein Reut_B5558 (90 aa).

The region spanning 5-80 is the GIY-YIG domain; the sequence is RQWYLYLLEC…KRMSSAQKIA (76 aa).

It belongs to the UPF0213 family.

The sequence is that of UPF0213 protein Reut_B5558 from Cupriavidus pinatubonensis (strain JMP 134 / LMG 1197) (Cupriavidus necator (strain JMP 134)).